The sequence spans 316 residues: 4-hydroxy-3-methylbut-2-enyl diphosphate reductase (316 aa).

Residue cysteine 12 participates in [4Fe-4S] cluster binding. (2E)-4-hydroxy-3-methylbut-2-enyl diphosphate contacts are provided by histidine 43 and histidine 81. Positions 43 and 81 each coordinate dimethylallyl diphosphate. Histidine 43 and histidine 81 together coordinate isopentenyl diphosphate. Cysteine 103 is a binding site for [4Fe-4S] cluster. (2E)-4-hydroxy-3-methylbut-2-enyl diphosphate is bound at residue histidine 131. Residue histidine 131 participates in dimethylallyl diphosphate binding. Position 131 (histidine 131) interacts with isopentenyl diphosphate. The active-site Proton donor is glutamate 133. Threonine 170 provides a ligand contact to (2E)-4-hydroxy-3-methylbut-2-enyl diphosphate. Cysteine 198 lines the [4Fe-4S] cluster pocket. Residues serine 226, asparagine 228, and serine 271 each contribute to the (2E)-4-hydroxy-3-methylbut-2-enyl diphosphate site. Dimethylallyl diphosphate is bound by residues serine 226, asparagine 228, and serine 271. 3 residues coordinate isopentenyl diphosphate: serine 226, asparagine 228, and serine 271.

The protein belongs to the IspH family. It depends on [4Fe-4S] cluster as a cofactor.

It carries out the reaction isopentenyl diphosphate + 2 oxidized [2Fe-2S]-[ferredoxin] + H2O = (2E)-4-hydroxy-3-methylbut-2-enyl diphosphate + 2 reduced [2Fe-2S]-[ferredoxin] + 2 H(+). The catalysed reaction is dimethylallyl diphosphate + 2 oxidized [2Fe-2S]-[ferredoxin] + H2O = (2E)-4-hydroxy-3-methylbut-2-enyl diphosphate + 2 reduced [2Fe-2S]-[ferredoxin] + 2 H(+). It participates in isoprenoid biosynthesis; dimethylallyl diphosphate biosynthesis; dimethylallyl diphosphate from (2E)-4-hydroxy-3-methylbutenyl diphosphate: step 1/1. It functions in the pathway isoprenoid biosynthesis; isopentenyl diphosphate biosynthesis via DXP pathway; isopentenyl diphosphate from 1-deoxy-D-xylulose 5-phosphate: step 6/6. Functionally, catalyzes the conversion of 1-hydroxy-2-methyl-2-(E)-butenyl 4-diphosphate (HMBPP) into a mixture of isopentenyl diphosphate (IPP) and dimethylallyl diphosphate (DMAPP). Acts in the terminal step of the DOXP/MEP pathway for isoprenoid precursor biosynthesis. The protein is 4-hydroxy-3-methylbut-2-enyl diphosphate reductase of Bacillus mycoides (strain KBAB4) (Bacillus weihenstephanensis).